The primary structure comprises 440 residues: Transposon Ty1-GR2 Gag polyprotein (440 aa).

The span at 1–16 (MESQQLSQHSHISHGS) shows a compositional bias: low complexity. Disordered stretches follow at residues 1-93 (MESQ…MMTQ), 126-173 (PQSQ…RPPP), and 352-440 (GSRN…PGTY). 2 stretches are compositionally biased toward polar residues: residues 48–60 (TKANSQQTTTPAS) and 127–152 (QSQFPQYPSSVGTPLSTPSPESGNTF). Positions 153–165 (TDSSSADSDMTST) are enriched in low complexity. Residues 299-401 (NNGIHINNKV…NSKSKTARAH (103 aa)) form an RNA-binding region. A compositionally biased stretch (low complexity) spans 402–418 (NVSTSNNSPSTDNDSIS). Ser-416 is subject to Phosphoserine. Positions 419 to 428 (KSTTEPIQLN) are enriched in polar residues. Basic and acidic residues predominate over residues 429 to 440 (NKHDLHLRPGTY).

In terms of assembly, homotrimer.

It localises to the cytoplasm. In terms of biological role, capsid protein (CA) is the structural component of the virus-like particle (VLP), forming the shell that encapsulates the retrotransposons dimeric RNA genome. The particles are assembled from trimer-clustered units and there are holes in the capsid shells that allow for the diffusion of macromolecules. CA also has nucleocapsid-like chaperone activity, promoting primer tRNA(i)-Met annealing to the multipartite primer-binding site (PBS), dimerization of Ty1 RNA and initiation of reverse transcription. The polypeptide is Transposon Ty1-GR2 Gag polyprotein (TY1A-GR2) (Saccharomyces cerevisiae (strain ATCC 204508 / S288c) (Baker's yeast)).